Reading from the N-terminus, the 158-residue chain is Large ribosomal subunit protein uL13 (158 aa).

A disordered region spans residues 129 to 158 (PEHGHHAQKPVALDFGAMNNKNGRGNNAGR). A compositionally biased stretch (low complexity) spans 144-158 (GAMNNKNGRGNNAGR).

This sequence belongs to the universal ribosomal protein uL13 family. Part of the 50S ribosomal subunit.

This protein is one of the early assembly proteins of the 50S ribosomal subunit, although it is not seen to bind rRNA by itself. It is important during the early stages of 50S assembly. This Anaplasma phagocytophilum (strain HZ) protein is Large ribosomal subunit protein uL13.